The sequence spans 212 residues: MQLFHLCLIISCSCPTVQASKLCLGWLWDMDIDPYKEFGATVQLLSFLPHDFFPSVRDLLDTASALFRDALESPEHCSPHHTALRQAILCWGELMTLATWVGANLQDPASRELVVTYVNINMGLKFRQLLWFHISCLTFGRETVIEYLVSFGVWIRTPQAYRPPNAPILSTLPETTVVRRRGRSPRRRTPSPRRRRSQSPRRRRSQSRESQC.

The signal sequence occupies residues 1–19; that stretch reads MQLFHLCLIISCSCPTVQA. Positions 25–27 are HBEAG; that stretch reads GWL. The interval 172 to 212 is disordered; that stretch reads LPETTVVRRRGRSPRRRTPSPRRRRSQSPRRRRSQSRESQC. The span at 178–205 shows a compositional bias: basic residues; that stretch reads VRRRGRSPRRRTPSPRRRRSQSPRRRRS. The 1; half-length repeat unit spans residues 184–190; sequence SPRRRTP. The interval 184-206 is 3 X 8 AA repeats of S-P-R-R-R-R-S-Q; sequence SPRRRTPSPRRRRSQSPRRRRSQ. Positions 184–212 are excised as a propeptide; sequence SPRRRTPSPRRRRSQSPRRRRSQSRESQC. Repeat copies occupy residues 191–198 and 199–206.

Belongs to the orthohepadnavirus precore antigen family. In terms of assembly, homodimerizes. Post-translationally, phosphorylated. In terms of processing, cleaved by host furin.

It localises to the secreted. The protein resides in the host nucleus. Its function is as follows. May regulate immune response to the intracellular capsid in acting as a T-cell tolerogen, by having an immunoregulatory effect which prevents destruction of infected cells by cytotoxic T-cells. This immune regulation may predispose to chronicity during perinatal infections and prevent severe liver injury during adult infections. The protein is External core antigen of Hepatitis B virus genotype D (isolate Germany/1-91/1991) (HBV-D).